We begin with the raw amino-acid sequence, 234 residues long: UPF0173 metal-dependent hydrolase RHECIAT_CH0001941 (234 aa).

Belongs to the UPF0173 family.

This is UPF0173 metal-dependent hydrolase RHECIAT_CH0001941 from Rhizobium etli (strain CIAT 652).